The sequence spans 211 residues: Small ribosomal subunit protein uS3 (211 aa).

The KH type-2 domain occupies 38–106 (LRKFIKKAFY…NIELNIIEVK (69 aa)).

The protein belongs to the universal ribosomal protein uS3 family. Part of the 30S ribosomal subunit. Forms a tight complex with proteins S10 and S14.

Functionally, binds the lower part of the 30S subunit head. Binds mRNA in the 70S ribosome, positioning it for translation. This Ehrlichia ruminantium (strain Welgevonden) protein is Small ribosomal subunit protein uS3.